A 196-amino-acid polypeptide reads, in one-letter code: Rac-like GTP-binding protein RAC13 (196 aa).

Position 13 to 20 (13 to 20) interacts with GTP; that stretch reads GDGAVGKT. Residues 35–43 carry the Effector region motif; the sequence is YVPTVFDNF. GTP-binding positions include 60–64 and 118–121; these read DTAGQ and TKLD. Cys-193 carries the cysteine methyl ester modification. Cys-193 carries S-geranylgeranyl cysteine lipidation. Residues 194-196 constitute a propeptide, removed in mature form; the sequence is AFL.

The protein belongs to the small GTPase superfamily. Rho family.

The protein localises to the cytoplasm. The protein resides in the membrane. Its function is as follows. Could participate in a signal transduction pathway that controls cytoskeletal organization. In terms of biological role, inactive GDP-bound Rho GTPases reside in the cytosol, are found in a complex with Rho GDP-dissociation inhibitors (Rho GDIs), and are released from the GDI protein in order to translocate to membranes upon activation. The chain is Rac-like GTP-binding protein RAC13 (RAC13) from Gossypium hirsutum (Upland cotton).